The chain runs to 509 residues: Probable cytochrome P450 6a14 (509 aa).

Cys454 contributes to the heme binding site.

This sequence belongs to the cytochrome P450 family. The cofactor is heme.

Its subcellular location is the endoplasmic reticulum membrane. The protein resides in the microsome membrane. Functionally, may be involved in the metabolism of insect hormones and in the breakdown of synthetic insecticides. This chain is Probable cytochrome P450 6a14 (Cyp6a14), found in Drosophila melanogaster (Fruit fly).